The sequence spans 247 residues: E3 SUMO-protein ligase NSE2 (247 aa).

Methionine 1 is subject to N-acetylmethionine. Residues lysine 90 and lysine 107 each participate in a glycyl lysine isopeptide (Lys-Gly) (interchain with G-Cter in SUMO2) cross-link. Serine 116 is modified (phosphoserine). Glycyl lysine isopeptide (Lys-Gly) (interchain with G-Cter in SUMO2) cross-links involve residues lysine 125 and lysine 130. The SP-RING-type zinc-finger motif lies at 154–240; that stretch reads VDEDMIVTQS…LRRAIESHNK (87 aa). Zn(2+)-binding residues include cysteine 185, histidine 187, cysteine 210, and cysteine 215.

This sequence belongs to the NSE2 family. As to quaternary structure, component of the SMC5-SMC6 complex which consists at least of SMC5, SMC6, NSMCE2, NSMCE1, NSMCE4A or EID3 and NSMCE3. Post-translationally, sumoylated, possibly via autosumoylation.

It localises to the nucleus. It is found in the chromosome. Its subcellular location is the telomere. The protein resides in the PML body. It participates in protein modification; protein sumoylation. E3 SUMO-protein ligase component of the SMC5-SMC6 complex, a complex involved in DNA double-strand break repair by homologous recombination. Is not be required for the stability of the complex. The complex may promote sister chromatid homologous recombination by recruiting the SMC1-SMC3 cohesin complex to double-strand breaks. Acts as an E3 ligase mediating SUMO attachment to various proteins such as SMC6L1 and TSNAX, the shelterin complex subunits TERF1, TERF2, TINF2 and TERF2IP, RAD51AP1, and maybe the cohesin components RAD21 and STAG2. Required for recruitment of telomeres to PML nuclear bodies. Required for sister chromatid cohesion during prometaphase and mitotic progression. The polypeptide is E3 SUMO-protein ligase NSE2 (Nsmce2) (Mus musculus (Mouse)).